The sequence spans 1018 residues: Contactin-1 (1018 aa).

The signal sequence occupies residues 1 to 20 (MKMWLLVSHLVIISITTCLA). 6 Ig-like C2-type domains span residues 41 to 131 (PIFE…ATLS), 137 to 223 (PFPP…KSVF), 241 to 326 (PADI…ARIY), 331 to 407 (PEWV…AELK), 413 to 500 (PTFE…GTLV), and 504 to 601 (PTRI…LVVR). Intrachain disulfides connect C65-C114 and C158-C211. Residues N208 and N258 are each glycosylated (N-linked (GlcNAc...) asparagine). A disulfide bridge connects residues C263 and C310. The N-linked (GlcNAc...) asparagine glycan is linked to N338. Disulfide bonds link C352/C391 and C436/C484. 2 N-linked (GlcNAc...) asparagine glycosylation sites follow: N457 and N473. Residue N494 is glycosylated (N-linked (GlcNAc...) (complex) asparagine). An N-linked (GlcNAc...) asparagine glycan is attached at N521. C526 and C583 are oxidised to a cystine. N591 carries an N-linked (GlcNAc...) asparagine glycan. Fibronectin type-III domains follow at residues 606-704 (PPGG…TDGA), 709-806 (APSD…SAQD), 811-906 (APTE…APPS), and 907-1000 (QPPR…TLSP). A disordered region spans residues 693–717 (SIPSNRIKTDGAAPNVAPSDVGGGG). Residue N933 is glycosylated (N-linked (GlcNAc...) asparagine). S993 carries GPI-anchor amidated serine lipidation. A propeptide spans 994–1018 (GAPTLSPSLLGLLLPAFGILVYLEF) (removed in mature form).

The protein belongs to the immunoglobulin superfamily. Contactin family. Monomer. Interacts with CNTNAP1 in cis form. Binds to the carbonic-anhydrase like domain of PTPRZ1. Interacts with NOTCH1 and TNR. Detected in a complex with NRCAM and PTPRB. Interacts with TASOR. In terms of tissue distribution, strongly expressed in brain and in neuroblastoma and retinoblastoma cell lines. Lower levels of expression in lung, pancreas, kidney and skeletal muscle.

The protein localises to the cell membrane. Its function is as follows. Contactins mediate cell surface interactions during nervous system development. Involved in the formation of paranodal axo-glial junctions in myelinated peripheral nerves and in the signaling between axons and myelinating glial cells via its association with CNTNAP1. Participates in oligodendrocytes generation by acting as a ligand of NOTCH1. Its association with NOTCH1 promotes NOTCH1 activation through the released notch intracellular domain (NICD) and subsequent translocation to the nucleus. Interaction with TNR induces a repulsion of neurons and an inhibition of neurite outgrowth. The sequence is that of Contactin-1 (CNTN1) from Homo sapiens (Human).